The primary structure comprises 326 residues: Isopenicillin N synthase (326 aa).

3 residues coordinate isopenicillin N: Arg84, Tyr88, and Tyr186. 5 residues coordinate N-[(5S)-5-amino-5-carboxypentanoyl]-L-cysteinyl-D-valine: Arg84, Tyr88, Tyr186, His209, and Asp211. Residues 183-283 form the Fe2OG dioxygenase domain; that stretch reads LIRYPFLENY…RLSIPFFANL (101 aa). Positions 209, 211, and 265 each coordinate Fe(2+). Position 274 (Arg274) interacts with 2-oxoglutarate. Residue Ser276 participates in isopenicillin N binding. Ser276 contacts N-[(5S)-5-amino-5-carboxypentanoyl]-L-cysteinyl-D-valine.

It belongs to the iron/ascorbate-dependent oxidoreductase family. It depends on Fe cation as a cofactor. L-ascorbate is required as a cofactor.

The enzyme catalyses N-[(5S)-5-amino-5-carboxypentanoyl]-L-cysteinyl-D-valine + O2 = isopenicillin N + 2 H2O. It functions in the pathway antibiotic biosynthesis; penicillin G biosynthesis; penicillin G from L-alpha-aminoadipate and L-cysteine and L-valine: step 2/3. In terms of biological role, removes, in the presence of oxygen, 4 hydrogen atoms from delta-L-(alpha-aminoadipyl)-L-cysteinyl-D-valine (ACV) to form the azetidinone and thiazolidine rings of isopenicillin. This is Isopenicillin N synthase (pcbC) from Lysobacter lactamgenus.